The primary structure comprises 559 residues: Glucose-6-phosphate isomerase (559 aa).

The Proton donor role is filled by Glu-363. Residues His-394 and Lys-523 contribute to the active site.

This sequence belongs to the GPI family.

Its subcellular location is the cytoplasm. The enzyme catalyses alpha-D-glucose 6-phosphate = beta-D-fructose 6-phosphate. It functions in the pathway carbohydrate biosynthesis; gluconeogenesis. It participates in carbohydrate degradation; glycolysis; D-glyceraldehyde 3-phosphate and glycerone phosphate from D-glucose: step 2/4. Catalyzes the reversible isomerization of glucose-6-phosphate to fructose-6-phosphate. In Bartonella quintana (strain Toulouse) (Rochalimaea quintana), this protein is Glucose-6-phosphate isomerase.